We begin with the raw amino-acid sequence, 382 residues long: Lysophosphatidylserine lipase ABHD12 (382 aa).

Over residues 1-12 (MRKRKGSADHDS) the composition is skewed to basic and acidic residues. Residues 1-45 (MRKRKGSADHDSSFTATLTDGSSDLKQCHKGTDADTDPGGSGKEM) form a disordered region. The Cytoplasmic segment spans residues 1–60 (MRKRKGSADHDSSFTATLTDGSSDLKQCHKGTDADTDPGGSGKEMGRRCRRGGLMWRLRR). Over residues 13–25 (SFTATLTDGSSDL) the composition is skewed to polar residues. The chain crosses the membrane as a helical span at residues 61–81 (ILIWLLGIYIAIPVIIKVCPS). Topologically, residues 82 to 382 (IQAKLVFLNF…DFLRAPHPHG (301 aa)) are extracellular. Asparagine 109 is a glycosylation site (N-linked (GlcNAc...) asparagine). Residue serine 232 is the Nucleophile of the active site. Active-site charge relay system residues include aspartate 319 and histidine 358.

This sequence belongs to the serine esterase family. Ubiquitously expressed in adult tissues.

Its subcellular location is the endoplasmic reticulum membrane. The enzyme catalyses 1-(9Z-octadecenoyl)-sn-glycero-3-phospho-L-serine + H2O = sn-glycero-3-phospho-L-serine + (9Z)-octadecenoate + H(+). It carries out the reaction 1-(9Z-octadecenoyl)-sn-glycero-3-phospho-(1'-sn-glycerol) + H2O = sn-glycero-3-phospho-(1'-sn-glycerol) + (9Z)-octadecenoate + H(+). It catalyses the reaction 1-(9Z-octadecenoyl)-sn-glycero-3-phospho-(1D-myo-inositol) + H2O = sn-glycero-3-phospho-1D-myo-inositol + (9Z)-octadecenoate + H(+). The catalysed reaction is 1-(9Z-octadecenoyl)-sn-glycero-3-phosphoethanolamine + H2O = sn-glycero-3-phosphoethanolamine + (9Z)-octadecenoate + H(+). The enzyme catalyses 1-(9Z-octadecenoyl)-sn-glycero-3-phosphocholine + H2O = 1-(9Z-octadecenoyl)-sn-glycerol + phosphocholine + H(+). It carries out the reaction 2-(9Z-octadecenoyl)-glycerol + H2O = glycerol + (9Z)-octadecenoate + H(+). It catalyses the reaction 1-hexadecanoyl-sn-glycero-3-phospho-L-serine + H2O = sn-glycero-3-phospho-L-serine + hexadecanoate + H(+). The catalysed reaction is 2-(5Z,8Z,11Z,14Z-eicosatetraenoyl)-glycerol + H2O = glycerol + (5Z,8Z,11Z,14Z)-eicosatetraenoate + H(+). The enzyme catalyses Hydrolyzes glycerol monoesters of long-chain fatty acids.. It carries out the reaction 1-decanoylglycerol + H2O = decanoate + glycerol + H(+). It catalyses the reaction 1-dodecanoylglycerol + H2O = dodecanoate + glycerol + H(+). The catalysed reaction is 1-tetradecanoylglycerol + H2O = tetradecanoate + glycerol + H(+). The enzyme catalyses 2-hexadecanoylglycerol + H2O = glycerol + hexadecanoate + H(+). It carries out the reaction 1-(9Z-octadecenoyl)-glycerol + H2O = glycerol + (9Z)-octadecenoate + H(+). It catalyses the reaction 2-(9Z,12Z-octadecadienoyl)-glycerol + H2O = (9Z,12Z)-octadecadienoate + glycerol + H(+). The catalysed reaction is 1-(5Z,8Z,11Z,14Z-eicosatetraenoyl)-glycerol + H2O = glycerol + (5Z,8Z,11Z,14Z)-eicosatetraenoate + H(+). The enzyme catalyses 1-(9Z,12Z-octadecadienoyl)-glycerol + H2O = (9Z,12Z)-octadecadienoate + glycerol + H(+). It carries out the reaction 1-hexadecanoylglycerol + H2O = glycerol + hexadecanoate + H(+). It catalyses the reaction 1-octadecanoylglycerol + H2O = octadecanoate + glycerol + H(+). The catalysed reaction is 1-octadecanoyl-2-(9,10-epoxyoctadecanoyl)-sn-glycero-3-phospho-L-serine + H2O = 9,10-epoxyoctadecanoate + 1-octadecanoyl-sn-glycero-3-phosphoserine + H(+). The enzyme catalyses 1-octadecanoyl-2-(10-hydroxyoctadecanoyl)-sn-glycero-3-phospho-L-serine + H2O = 1-octadecanoyl-sn-glycero-3-phosphoserine + 10-hydroxyoctadecanoate + H(+). It carries out the reaction 1-hexadecanoyl-2-(10-hydroxyoctadecanoyl)-sn-glycero-3-phospho-L-serine + H2O = 10-hydroxyoctadecanoate + 1-hexadecanoyl-sn-glycero-3-phospho-L-serine + H(+). In terms of biological role, lysophosphatidylserine (LPS) lipase that mediates the hydrolysis of lysophosphatidylserine, a class of signaling lipids that regulates immunological and neurological processes. Represents a major lysophosphatidylserine lipase in the brain, thereby playing a key role in the central nervous system. Also able to hydrolyze oxidized phosphatidylserine; oxidized phosphatidylserine is produced in response to severe inflammatory stress and constitutes a proapoptotic 'eat me' signal. Also has monoacylglycerol (MAG) lipase activity: hydrolyzes 2-arachidonoylglycerol (2-AG), thereby acting as a regulator of endocannabinoid signaling pathways. Has a strong preference for very-long-chain lipid substrates; substrate specificity is likely due to improved catalysis and not improved substrate binding. This chain is Lysophosphatidylserine lipase ABHD12, found in Danio rerio (Zebrafish).